The primary structure comprises 380 residues: Queuine tRNA-ribosyltransferase (380 aa).

Asp-96 acts as the Proton acceptor in catalysis. Residues 96–100 (DSGGF), Asp-150, Gln-193, and Gly-220 each bind substrate. The tract at residues 251-257 (GVGAPDS) is RNA binding. Asp-270 functions as the Nucleophile in the catalytic mechanism. The RNA binding; important for wobble base 34 recognition stretch occupies residues 275–279 (TRIAR). Positions 308, 310, 313, and 339 each coordinate Zn(2+).

This sequence belongs to the queuine tRNA-ribosyltransferase family. Homodimer. Within each dimer, one monomer is responsible for RNA recognition and catalysis, while the other monomer binds to the replacement base PreQ1. Zn(2+) is required as a cofactor.

It catalyses the reaction 7-aminomethyl-7-carbaguanine + guanosine(34) in tRNA = 7-aminomethyl-7-carbaguanosine(34) in tRNA + guanine. Its pathway is tRNA modification; tRNA-queuosine biosynthesis. In terms of biological role, catalyzes the base-exchange of a guanine (G) residue with the queuine precursor 7-aminomethyl-7-deazaguanine (PreQ1) at position 34 (anticodon wobble position) in tRNAs with GU(N) anticodons (tRNA-Asp, -Asn, -His and -Tyr). Catalysis occurs through a double-displacement mechanism. The nucleophile active site attacks the C1' of nucleotide 34 to detach the guanine base from the RNA, forming a covalent enzyme-RNA intermediate. The proton acceptor active site deprotonates the incoming PreQ1, allowing a nucleophilic attack on the C1' of the ribose to form the product. After dissociation, two additional enzymatic reactions on the tRNA convert PreQ1 to queuine (Q), resulting in the hypermodified nucleoside queuosine (7-(((4,5-cis-dihydroxy-2-cyclopenten-1-yl)amino)methyl)-7-deazaguanosine). The protein is Queuine tRNA-ribosyltransferase of Streptococcus equi subsp. equi (strain 4047).